Here is a 199-residue protein sequence, read N- to C-terminus: Potassium-transporting ATPase KdpC subunit (199 aa).

The chain crosses the membrane as a helical span at residues 7–27; it reads PALVMTAALCLITGIIYPGLI.

This sequence belongs to the KdpC family. In terms of assembly, the system is composed of three essential subunits: KdpA, KdpB and KdpC.

The protein resides in the cell inner membrane. Its function is as follows. Part of the high-affinity ATP-driven potassium transport (or Kdp) system, which catalyzes the hydrolysis of ATP coupled with the electrogenic transport of potassium into the cytoplasm. This subunit acts as a catalytic chaperone that increases the ATP-binding affinity of the ATP-hydrolyzing subunit KdpB by the formation of a transient KdpB/KdpC/ATP ternary complex. The chain is Potassium-transporting ATPase KdpC subunit from Gemmatimonas aurantiaca (strain DSM 14586 / JCM 11422 / NBRC 100505 / T-27).